Here is a 284-residue protein sequence, read N- to C-terminus: 2-dehydro-3-deoxyphosphooctonate aldolase (284 aa).

The protein belongs to the KdsA family.

The protein localises to the cytoplasm. It catalyses the reaction D-arabinose 5-phosphate + phosphoenolpyruvate + H2O = 3-deoxy-alpha-D-manno-2-octulosonate-8-phosphate + phosphate. It participates in carbohydrate biosynthesis; 3-deoxy-D-manno-octulosonate biosynthesis; 3-deoxy-D-manno-octulosonate from D-ribulose 5-phosphate: step 2/3. Its pathway is bacterial outer membrane biogenesis; lipopolysaccharide biosynthesis. This is 2-dehydro-3-deoxyphosphooctonate aldolase from Photobacterium profundum (strain SS9).